We begin with the raw amino-acid sequence, 700 residues long: Dymeclin (700 aa).

Residue glycine 2 is the site of N-myristoyl glycine attachment. At serine 347 the chain carries Phosphoserine.

The protein belongs to the dymeclin family.

The protein is Dymeclin of Drosophila pseudoobscura pseudoobscura (Fruit fly).